The chain runs to 321 residues: Probable protein phosphatase 2C 44 (321 aa).

Disordered stretches follow at residues Met-1–Lys-36 and Asn-51–Thr-70. Positions Ser-9–Ala-31 are enriched in low complexity. The segment covering Asn-51–Val-69 has biased composition (polar residues). Positions Thr-70–Phe-319 constitute a PPM-type phosphatase domain. The Mn(2+) site is built by Asp-107, Gly-108, Asp-271, and Asp-310.

This sequence belongs to the PP2C family. The cofactor is Mg(2+). Requires Mn(2+) as cofactor.

The enzyme catalyses O-phospho-L-seryl-[protein] + H2O = L-seryl-[protein] + phosphate. The catalysed reaction is O-phospho-L-threonyl-[protein] + H2O = L-threonyl-[protein] + phosphate. In Oryza sativa subsp. japonica (Rice), this protein is Probable protein phosphatase 2C 44.